We begin with the raw amino-acid sequence, 654 residues long: MKFPMVAAALLLLCAVRAEEEDKKEDVGTVVGIDLGTTYSCVGVFKNGRVEIIANDQGNRITPSYVAFTPEGERLIGDAAKNQLTSNPENTVFDAKRLIGRTWNDPSVQQDIKFLPFKVVEKKTKPYIQVDIGGGQTKTFAPEEISAMVLTKMKETAEAYLGKKVTHAVVTVPAYFNDAQRQATKDAGTIAGLNVMRIINEPTAAAIAYGLDKREGEKNILVFDLGGGTFDVSLLTIDNGVFEVVATNGDTHLGGEDFDQRVMEHFIKLYKKKTGKDVRKDNRAVQKLRREVEKAKRALSSQHQARIEIESFFEGEDFSETLTRAKFEELNMDLFRSTMKPVQKVLEDSDLKKSDIDEIVLVGGSTRIPKIQQLVKEFFNGKEPSRGINPDEAVAYGAAVQAGVLSGDQDTGDLVLLDVCPLTLGIETVGGVMTKLIPRNTVVPTKKSQIFSTASDNQPTVTIKVYEGERPLTKDNHLLGTFDLTGIPPAPRGVPQIEVTFEIDVNGILRVTAEDKGTGNKNKITITNDQNRLTPEEIERMVNDAEKFAEEDKKLKERIDTRNELESYAYSLKNQIGDKEKLGGKLSSEDKETMEKAVEEKIEWLESHQDADIEDFKAKKKELEEIVQPIISKLYGSAGPPPTGEEDTSEKDEL.

Residues 1-18 (MKFPMVAAALLLLCAVRA) form the signal peptide. The tract at residues 1–80 (MKFPMVAAAL…EGERLIGDAA (80 aa)) is required for interaction with ELAPOR1. 36 to 39 (GTTY) is an ATP binding site. At serine 86 the chain carries Phosphoserine. Lysine 96 contacts ATP. Residue lysine 125 is modified to N6-acetyllysine. The tract at residues 125 to 280 (KPYIQVDIGG…KKKTGKDVRK (156 aa)) is nucleotide-binding (NBD). The residue at position 160 (tyrosine 160) is a 3'-nitrotyrosine. Residue lysine 213 is modified to N6-acetyllysine. 227–229 (GGT) contributes to the ATP binding site. N6-acetyllysine is present on lysine 271. Residue 293-300 (EKAKRALS) coordinates ATP. Lysine 326 is modified (N6-acetyllysine). Lysine 352 is covalently cross-linked (Glycyl lysine isopeptide (Lys-Gly) (interchain with G-Cter in SUMO2)). N6-acetyllysine; alternate is present on lysine 353. A Glycyl lysine isopeptide (Lys-Gly) (interchain with G-Cter in SUMO1); alternate cross-link involves residue lysine 353. 364-367 (GSTR) provides a ligand contact to ATP. An interdomain linker region spans residues 409 to 419 (QDTGDLVLLDV). A substrate-binding (SBD) region spans residues 420-500 (CPLTLGIETV…PRGVPQIEVT (81 aa)). At lysine 447 the chain carries N6-succinyllysine. Arginine 492 is modified (omega-N-methylarginine). Threonine 518 bears the O-AMP-threonine; alternate mark. Threonine 518 is subject to Phosphothreonine; alternate. The residue at position 585 (lysine 585) is an N6,N6,N6-trimethyllysine; by METTL21A; in vitro. At lysine 585 the chain carries N6,N6-dimethyllysine; alternate. Lysine 585 carries the N6-methyllysine; alternate modification. Lysine 591 is subject to N6-methyllysine. Residues 632–654 (SKLYGSAGPPPTGEEDTSEKDEL) form a disordered region. Threonine 643 and threonine 648 each carry phosphothreonine. Positions 644–654 (GEEDTSEKDEL) are enriched in acidic residues. Residue serine 649 is modified to Phosphoserine. Positions 651–654 (KDEL) match the Prevents secretion from ER motif.

The protein belongs to the heat shock protein 70 family. As to quaternary structure, monomer and homooligomer; homooligomerization via the interdomain linker inactivates the chaperone activity and acts as a storage of HSPA5/BiP molecules. Interacts with DNAJC1 (via J domain). Component of an EIF2 complex at least composed of CELF1/CUGBP1, CALR, CALR3, EIF2S1, EIF2S2, HSP90B1 and HSPA5. Part of a large chaperone multiprotein complex comprising DNAJB11, HSP90B1, HSPA5, HYOU, PDIA2, PDIA4, PDIA6, PPIB, SDF2L1, UGGT1 and very small amounts of ERP29, but not, or at very low levels, CALR nor CANX. Interacts with TMEM132A and TRIM21. May form a complex with ERLEC1, OS9, SEL1L and SYVN1. Interacts with DNAJC10. Interacts with DNAJB9/ERdj4; leading to recruit HSPA5/BiP to ERN1/IRE1. Interacts with ERN1/IRE1 (via luminal domain); the interaction takes place following interaction with DNAJB9/ERdj4 and leads to inactivate ERN1/IRE1, the interaction also competitively inhibits ERN1 interaction with MANF. Interacts directly with MANF (via SAP domain); the interaction inhibits ATP binding to HSPA5/BiP and subsequent nucleotide exchange. Interacts with EIF2AK3/PERK (via luminal domain); interaction leads to inactivate EIF2AK3/PERK. Interacts with MX1. Interacts with METTL23. Interacts with CEMIP; the interaction induces calcium leakage from the endoplasmic reticulum and cell migration. Interacts with PCSK4 form; the interaction takes place in the endoplasmic reticulum. Interacts with CIPC. Interacts with CCDC88B (via C-terminus); the interaction opposes ERN1-mediated JNK activation, protecting against apoptosis. Interacts with INPP5K; necessary for INPP5K localization at the endoplasmic reticulum. Interacts with LOXL2; leading to activate the ERN1/IRE1-XBP1 pathway of the unfolded protein response. Interacts with CLU under stressed condition; interaction increases CLU protein stability; facilitates its retrotranslocation and redistribution to the mitochondria; cooperatively suppress stress-induced apoptosis by stabilizing mitochondrial membrane integrity. Interacts with CCDC47. Interacts with CLN3. Interacts with ELAPOR1; may regulate the function of HSPA5 in apoptosis and cell proliferation. Interacts with CASP7. Interacts with ILDR2; the interaction stabilizes ILDR2 expression. Interacts with ADAM7. In terms of processing, in unstressed cells, AMPylation at Thr-518 by FICD inactivates the chaperome activity: AMPylated form is locked in a relatively inert state and only weakly stimulated by J domain-containing proteins. In response to endoplasmic reticulum stress, de-AMPylation by the same protein, FICD, restores the chaperone activity.

It localises to the endoplasmic reticulum lumen. It is found in the melanosome. The protein localises to the cytoplasm. Its subcellular location is the cell surface. It carries out the reaction ATP + H2O = ADP + phosphate + H(+). The chaperone activity is regulated by ATP-induced allosteric coupling of the nucleotide-binding (NBD) and substrate-binding (SBD) domains. In the ADP-bound and nucleotide-free (apo) states, the two domains have little interaction. In contrast, in the ATP-bound state the two domains are tightly coupled, which results in drastically accelerated kinetics in both binding and release of polypeptide substrates. J domain-containing co-chaperones (DNAJB9/ERdj4 or DNAJC10/ERdj5) stimulate the ATPase activity and are required for efficient substrate recognition by HSPA5/BiP. Homooligomerization inactivates participating HSPA5/BiP protomers and probably act as reservoirs to store HSPA5/BiP molecules when they are not needed by the cell. In terms of biological role, endoplasmic reticulum chaperone that plays a key role in protein folding and quality control in the endoplasmic reticulum lumen. Involved in the correct folding of proteins and degradation of misfolded proteins via its interaction with DNAJC10/ERdj5, probably to facilitate the release of DNAJC10/ERdj5 from its substrate. Acts as a key repressor of the EIF2AK3/PERK and ERN1/IRE1-mediated unfolded protein response (UPR). In the unstressed endoplasmic reticulum, recruited by DNAJB9/ERdj4 to the luminal region of ERN1/IRE1, leading to disrupt the dimerization of ERN1/IRE1, thereby inactivating ERN1/IRE1. Also binds and inactivates EIF2AK3/PERK in unstressed cells. Accumulation of misfolded protein in the endoplasmic reticulum causes release of HSPA5/BiP from ERN1/IRE1 and EIF2AK3/PERK, allowing their homodimerization and subsequent activation. Plays an auxiliary role in post-translational transport of small presecretory proteins across endoplasmic reticulum (ER). May function as an allosteric modulator for SEC61 channel-forming translocon complex, likely cooperating with SEC62 to enable the productive insertion of these precursors into SEC61 channel. Appears to specifically regulate translocation of precursors having inhibitory residues in their mature region that weaken channel gating. May also play a role in apoptosis and cell proliferation. This is Endoplasmic reticulum chaperone BiP from Cricetulus griseus (Chinese hamster).